The following is a 296-amino-acid chain: Ribosomal protein L11 methyltransferase (296 aa).

4 residues coordinate S-adenosyl-L-methionine: Thr147, Gly168, Asp190, and Asn232.

It belongs to the methyltransferase superfamily. PrmA family.

It localises to the cytoplasm. The catalysed reaction is L-lysyl-[protein] + 3 S-adenosyl-L-methionine = N(6),N(6),N(6)-trimethyl-L-lysyl-[protein] + 3 S-adenosyl-L-homocysteine + 3 H(+). In terms of biological role, methylates ribosomal protein L11. In Marinomonas sp. (strain MWYL1), this protein is Ribosomal protein L11 methyltransferase.